We begin with the raw amino-acid sequence, 78 residues long: Large ribosomal subunit protein bL28 (78 aa).

It belongs to the bacterial ribosomal protein bL28 family.

The polypeptide is Large ribosomal subunit protein bL28 (Corynebacterium aurimucosum (strain ATCC 700975 / DSM 44827 / CIP 107346 / CN-1) (Corynebacterium nigricans)).